The chain runs to 354 residues: uncharacterized protein (354 aa).

9 helical membrane passes run Met9–Ser29, Ile31–Thr51, Asn76–Val96, Phe109–Val129, Ile144–Ile164, Gly185–Val205, Tyr278–Tyr298, Gly306–Gly326, and Ile327–Ile347.

It is found in the cell membrane. This is an uncharacterized protein from Methanocaldococcus jannaschii (strain ATCC 43067 / DSM 2661 / JAL-1 / JCM 10045 / NBRC 100440) (Methanococcus jannaschii).